Here is an 837-residue protein sequence, read N- to C-terminus: Probable aldehyde oxidase 4 (837 aa).

Positions 9 to 98 (ERVVFELNGE…FCSIITTEGL (90 aa)) constitute a 2Fe-2S ferredoxin-type domain. 4 residues coordinate [2Fe-2S] cluster: cysteine 50, cysteine 55, cysteine 58, and cysteine 80. Residues 240–427 (ISGPREGWYC…LSIFIPHWAS (188 aa)) enclose the FAD-binding PCMH-type domain.

The protein belongs to the xanthine dehydrogenase family. As to quaternary structure, aldehyde oxidases (AO) are homodimers and heterodimers of AO subunits. It depends on [2Fe-2S] cluster as a cofactor. FAD is required as a cofactor. Mo-molybdopterin serves as cofactor.

It carries out the reaction an aldehyde + O2 + H2O = a carboxylate + H2O2 + H(+). The chain is Probable aldehyde oxidase 4 from Oryza sativa subsp. japonica (Rice).